Reading from the N-terminus, the 154-residue chain is UPF0178 protein H16_B0290 (154 aa).

Belongs to the UPF0178 family.

This chain is UPF0178 protein H16_B0290, found in Cupriavidus necator (strain ATCC 17699 / DSM 428 / KCTC 22496 / NCIMB 10442 / H16 / Stanier 337) (Ralstonia eutropha).